The following is a 172-amino-acid chain: Ribosome maturation factor RimM (172 aa).

The PRC barrel domain occupies 96 to 168; that stretch reads EGEFYYHQII…RVDVELMEGL (73 aa).

The protein belongs to the RimM family. Binds ribosomal protein uS19.

Its subcellular location is the cytoplasm. Its function is as follows. An accessory protein needed during the final step in the assembly of 30S ribosomal subunit, possibly for assembly of the head region. Essential for efficient processing of 16S rRNA. May be needed both before and after RbfA during the maturation of 16S rRNA. It has affinity for free ribosomal 30S subunits but not for 70S ribosomes. The protein is Ribosome maturation factor RimM of Streptococcus pyogenes serotype M1.